A 310-amino-acid chain; its full sequence is Ribose-phosphate pyrophosphokinase (310 aa).

ATP-binding positions include 34 to 36 and 93 to 94; these read DGE and RQ. Mg(2+) is bound by residues His-127 and Asp-167. The active site involves Lys-190. D-ribose 5-phosphate contacts are provided by residues Arg-192, Asp-216, and 220 to 224; that span reads DSGGT.

This sequence belongs to the ribose-phosphate pyrophosphokinase family. Class I subfamily. In terms of assembly, homohexamer. The cofactor is Mg(2+).

The protein localises to the cytoplasm. The enzyme catalyses D-ribose 5-phosphate + ATP = 5-phospho-alpha-D-ribose 1-diphosphate + AMP + H(+). It functions in the pathway metabolic intermediate biosynthesis; 5-phospho-alpha-D-ribose 1-diphosphate biosynthesis; 5-phospho-alpha-D-ribose 1-diphosphate from D-ribose 5-phosphate (route I): step 1/1. Its function is as follows. Involved in the biosynthesis of the central metabolite phospho-alpha-D-ribosyl-1-pyrophosphate (PRPP) via the transfer of pyrophosphoryl group from ATP to 1-hydroxyl of ribose-5-phosphate (Rib-5-P). This Maricaulis maris (strain MCS10) (Caulobacter maris) protein is Ribose-phosphate pyrophosphokinase.